The primary structure comprises 681 residues: Sodium-dependent phosphate transporter 1 (681 aa).

The next 6 membrane-spanning stretches (helical) occupy residues 25–45 (NLWMLILGFIIAFVLAFSVGA), 66–86 (ACILASIFETVGSALLGAKVS), 106–126 (LMAGSVSAMFGSAVWQLVASF), 162–182 (IVMSWFVSPLLSGIMSGILFF), 201–221 (ALPIFYACTIGINLFSIMYTG), and 234–254 (GTILISVGCAVFCALIVWFFV). The segment at 266 to 295 (VKSSPSESPLMEKKNNLKDHEETKMAPGDV) is disordered. Phosphoserine is present on residues Ser-269 and Ser-273. Basic and acidic residues predominate over residues 275–289 (LMEKKNNLKDHEETK). The next 4 helical transmembrane spans lie at 513–533 (VSLLFQFLQILTACFGSFAHG), 561–581 (ATPIWLLLYGGVGICMGLWVW), 602–622 (FSIELASAFTVVVASNIGLPI), and 652–672 (IFMAWFVTVPISGVISAAIMA).

This sequence belongs to the inorganic phosphate transporter (PiT) (TC 2.A.20) family. Ubiquitously expressed.

Its subcellular location is the cell membrane. It catalyses the reaction 2 Na(+)(out) + phosphate(out) = 2 Na(+)(in) + phosphate(in). Its function is as follows. Sodium-phosphate symporter which preferentially transports the monovalent form of phosphate with a stoichiometry of two sodium ions per phosphate ion. May play a role in extracellular matrix and cartilage calcification as well as in vascular calcification. Essential for cell proliferation but this function is independent of its phosphate transporter activity. The polypeptide is Sodium-dependent phosphate transporter 1 (Slc20a1) (Rattus norvegicus (Rat)).